The following is a 428-amino-acid chain: MKIINSKQKALQELRRISQRTTSGDNKKINSIVENILQEVKFHGDIAVEKYTKKFDGFYPKPMQVSTRDLKTAWEETDQHLKKSLEVAYQRIKKFHEKEIPESFTIKGEFGDSVQRRWMPVKNAGLYIPGGRAAYPSTVLMNAIPAKVAGVKEISMVSPGNEKGKINTTVLAAAYLSGVDKVFRIGGAQAIGALAFGTKQINKVDVISGPGNIYVTTAKKLIYGFTGIDSLAGPSEILIIADRTANSSQIASDLLAQAEHDPLASSILLTTSNDQAQEVFDEVFKIIENHPRKEICIQSIKNWGLIAICENLESCVELSNEFAPEHLEIITIDPKTTLKSIENAGAIFLGKWTPEAVGDYLAGPNHTLPTCGNARFSGSLGVETFMKNSSIIEFNEKSLKINSVDIINLANSEGLHSHANSVKIRFED.

NAD(+) contacts are provided by Tyr-127, Gln-189, and Asn-212. Substrate contacts are provided by Ser-235, Gln-257, and His-260. Positions 257 and 260 each coordinate Zn(2+). Active-site proton acceptor residues include Glu-325 and His-326. Substrate is bound by residues His-326, Asp-359, Glu-413, and His-418. Asp-359 lines the Zn(2+) pocket. His-418 lines the Zn(2+) pocket.

The protein belongs to the histidinol dehydrogenase family. Zn(2+) serves as cofactor.

It carries out the reaction L-histidinol + 2 NAD(+) + H2O = L-histidine + 2 NADH + 3 H(+). Its pathway is amino-acid biosynthesis; L-histidine biosynthesis; L-histidine from 5-phospho-alpha-D-ribose 1-diphosphate: step 9/9. Catalyzes the sequential NAD-dependent oxidations of L-histidinol to L-histidinaldehyde and then to L-histidine. This is Histidinol dehydrogenase from Prochlorococcus marinus subsp. pastoris (strain CCMP1986 / NIES-2087 / MED4).